The primary structure comprises 615 residues: Ectoine/glycine betaine/proline transporter EctP (615 aa).

12 helical membrane-spanning segments follow: residues 24 to 44 (FIFSISVGFIVVFVIATIALG), 62 to 82 (LGWMYIGGVSLVFIFLMGIFA), 102 to 122 (IVWFCMLFAGGVGAVLMFWGV), 156 to 176 (FGIHMWVIMALPGLSLGYFIY), 207 to 227 (LAIVGTTFGIAVSVGLGVLQI), 240 to 260 (VSWVQLLIILIITAVACISVA), 275 to 295 (IAMAVALMFFILFTGPTLTLL), 329 to 349 (WTVFYWAWTICWSPYVGMFVA), 360 to 380 (FIGGVLALPAIFGVVWFSIFG), 417 to 437 (LTGIVSAFALVIIVIFFITSI), 463 to 483 (WACTIGAVAGSLLIISPSSGI), and 489 to 509 (VVIIVAFPFFLVQFVMMFSLL). Disordered stretches follow at residues 524–562 (TRQWEKTDTPEKLEEHSSQPAPGYDDEGNPLPMPALEHD) and 589–615 (PEEAQEMGSRFKIVEQTRPQSRDEYDI). Composition is skewed to basic and acidic residues over residues 526–540 (QWEKTDTPEKLEEHS) and 600–615 (KIVEQTRPQSRDEYDI).

The protein belongs to the BCCT transporter (TC 2.A.15) family.

The protein resides in the cell membrane. In terms of biological role, involved in the uptake of osmoprotectants. Can transport ectoine, proline and glycine betaine. Na(+) is probably the coupling ion. In Corynebacterium glutamicum (strain ATCC 13032 / DSM 20300 / JCM 1318 / BCRC 11384 / CCUG 27702 / LMG 3730 / NBRC 12168 / NCIMB 10025 / NRRL B-2784 / 534), this protein is Ectoine/glycine betaine/proline transporter EctP.